The chain runs to 127 residues: Translation initiation factor 5A (127 aa).

K35 is modified (hypusine).

This sequence belongs to the eIF-5A family.

The protein localises to the cytoplasm. Its function is as follows. Functions by promoting the formation of the first peptide bond. The sequence is that of Translation initiation factor 5A from Methanococcoides burtonii (strain DSM 6242 / NBRC 107633 / OCM 468 / ACE-M).